A 143-amino-acid polypeptide reads, in one-letter code: Transcriptional regulator MraZ (143 aa).

2 SpoVT-AbrB domains span residues 5-47 (EFRH…PMKE) and 76-119 (ATEC…DEAR).

This sequence belongs to the MraZ family. In terms of assembly, forms oligomers.

The protein localises to the cytoplasm. Its subcellular location is the nucleoid. This chain is Transcriptional regulator MraZ, found in Enterococcus hirae.